We begin with the raw amino-acid sequence, 309 residues long: Porphobilinogen deaminase (309 aa).

Position 242 is an S-(dipyrrolylmethanemethyl)cysteine (cysteine 242).

This sequence belongs to the HMBS family. Monomer. Dipyrromethane is required as a cofactor.

The enzyme catalyses 4 porphobilinogen + H2O = hydroxymethylbilane + 4 NH4(+). It participates in porphyrin-containing compound metabolism; protoporphyrin-IX biosynthesis; coproporphyrinogen-III from 5-aminolevulinate: step 2/4. Tetrapolymerization of the monopyrrole PBG into the hydroxymethylbilane pre-uroporphyrinogen in several discrete steps. The protein is Porphobilinogen deaminase of Legionella pneumophila (strain Lens).